A 336-amino-acid chain; its full sequence is UDP-N-acetylmuramoylpentapeptide-lysine N(6)-alanyltransferase (336 aa).

Substrate-binding positions include 37 to 40, Y104, R212, Y216, and Y257; that span reads KNNW.

This sequence belongs to the FemABX family.

It catalyses the reaction UDP-N-acetyl-alpha-D-muramoyl-L-alanyl-gamma-D-glutamyl-L-lysyl-D-alanyl-D-alanine + L-alanyl-tRNA(Ala) = UDP-N-acetyl-alpha-D-muramoyl-L-alanyl-gamma-D-glutamyl-N(6)-(L-alanyl)-L-lysyl-D-alanyl-D-alanine + tRNA(Ala) + H(+). Involved in the synthesis of the bacterial cell wall. Catalyzes the addition of alanine into the interchain peptide bridge of peptidoglycan precursor using aminoacyl-tRNA(Ala) as amino acid donor. This alanine is added to the epsilon-amino group of the L-lysine of the peptidoglycan UDP-N-acetyl-alpha-D-muramoyl-L-alanyl-D-glutamyl-L-lysyl-D-alanyl-D-alanine, in a ribosome-independent mechanism. Specific for UDP-N-acetyl-muramoyl-pentapeptide. Has no activity toward UDP-N-acetyl-muramoyl-tetrapeptide or UDP-N-acetyl-muramoyl-tripeptide. Also acts on L-seryl-tRNA(Ser). The chain is UDP-N-acetylmuramoylpentapeptide-lysine N(6)-alanyltransferase from Weissella viridescens (Lactobacillus viridescens).